Consider the following 515-residue polypeptide: Maturase K (515 aa).

Belongs to the intron maturase 2 family. MatK subfamily.

The protein localises to the plastid. Its subcellular location is the chloroplast. Usually encoded in the trnK tRNA gene intron. Probably assists in splicing its own and other chloroplast group II introns. The sequence is that of Maturase K from Pinus banksiana (Jack pine).